The primary structure comprises 384 residues: Helix-loop-helix protein delilah (384 aa).

Disordered regions lie at residues 1 to 101 (MKSN…TANA) and 187 to 227 (EEAE…KIVP). The span at 75-86 (KSRKNAPTKSKT) shows a compositional bias: basic residues. The bHLH domain occupies 94-153 (YRRKTANARERTRMREINTAFETLRHCVPEAIKGEDAANTNEKLTKITTLRLAMKYITML). Residues 209 to 224 (KKSSAASKRQSQKQAK) are compositionally biased toward low complexity.

As to quaternary structure, efficient DNA binding requires dimerization with another bHLH protein, possibly with da. In terms of tissue distribution, expressed almost exclusively in the attachments sites of the somatic muscles to tendon cells in the epidermis.

It localises to the nucleus. Functionally, probably plays an important role in the differentiation of epidermal cells into the tendon cells that form the attachment sites for all muscles. The protein is Helix-loop-helix protein delilah (tx) of Drosophila melanogaster (Fruit fly).